A 305-amino-acid polypeptide reads, in one-letter code: DNA-directed RNA polymerase 35 kDa subunit (305 aa).

It belongs to the poxviridae DNA-directed RNA polymerase 35 kDa subunit family. In terms of assembly, the DNA-dependent RNA polymerase used for intermediate and late genes expression consists of eight subunits 147 kDa, 133 kDa, 35 kDa, 30 kDa, 22 kDa, 19 kDa, 18 kDa and 7 kDa totalling more than 500 kDa in mass. The same holoenzyme, with the addition of the transcription-specificity factor RAP94, is used for early gene expression.

Its subcellular location is the virion. It catalyses the reaction RNA(n) + a ribonucleoside 5'-triphosphate = RNA(n+1) + diphosphate. In terms of biological role, part of the DNA-dependent RNA polymerase which catalyzes the transcription of viral DNA into RNA using the four ribonucleoside triphosphates as substrates. Responsible for the transcription of early, intermediate and late genes. DNA-dependent RNA polymerase associates with the early transcription factor (ETF), itself composed of D6 and A7, thereby allowing the early genes transcription. Late transcription, and probably also intermediate transcription, require newly synthesized RNA polymerase. The protein is DNA-directed RNA polymerase 35 kDa subunit (OPG156) of Homo sapiens (Human).